The chain runs to 102 residues: uncharacterized protein (102 aa).

Residues 29–52 (IGSTYFCFGGAIFILVAPLTNLVY) traverse the membrane as a helical segment.

The protein localises to the membrane. This is an uncharacterized protein from Saccharomyces cerevisiae (strain ATCC 204508 / S288c) (Baker's yeast).